Here is a 349-residue protein sequence, read N- to C-terminus: Mannonate dehydratase (349 aa).

The protein belongs to the mannonate dehydratase family. Fe(2+) is required as a cofactor. Requires Mn(2+) as cofactor.

The catalysed reaction is D-mannonate = 2-dehydro-3-deoxy-D-gluconate + H2O. Its pathway is carbohydrate metabolism; pentose and glucuronate interconversion. In terms of biological role, catalyzes the dehydration of D-mannonate. This chain is Mannonate dehydratase, found in Oceanobacillus iheyensis (strain DSM 14371 / CIP 107618 / JCM 11309 / KCTC 3954 / HTE831).